The primary structure comprises 317 residues: Melanocyte-stimulating hormone receptor (317 aa).

At 1 to 37 the chain is on the extracellular side; sequence MPVLGSQRRLLGSLNCTPPATFPLMLAPNRTGPQCLE. Residue Asn-29 is glycosylated (N-linked (GlcNAc...) asparagine). Residues 38–63 traverse the membrane as a helical segment; the sequence is VSIPNGLFLSLGLVSLVENVLVVAAI. Residues 64–72 are Cytoplasmic-facing; sequence AKNSNLHSP. The helical transmembrane segment at 73-93 threads the bilayer; the sequence is MYYFICCLAVSDLLVSVSNVL. Residues 94–118 lie on the Extracellular side of the membrane; it reads ETAVMLLLEAGALAARAAVVQQLDN. Residues 119-140 form a helical membrane-spanning segment; that stretch reads VIDVLICGSMVSSLCFLGAIAV. The Cytoplasmic segment spans residues 141–163; the sequence is DRYISIFYALRYHSVVTLPRAWR. The chain crosses the membrane as a helical span at residues 164 to 183; the sequence is IIAAIWVASILTSLLFITYY. At 184 to 191 the chain is on the extracellular side; that stretch reads NHTVVLLC. A helical membrane pass occupies residues 192-211; the sequence is LVGFFIAMLALMAVLYVHML. The Cytoplasmic segment spans residues 212–240; that stretch reads ARACQHARGIARLQKRQRPIHRGFGLKGA. The chain crosses the membrane as a helical span at residues 241 to 266; sequence ATLTILLGVFFLCWGPFFLHLSLIVL. The Extracellular portion of the chain corresponds to 267–279; sequence CPQHPTCGCIFKN. A helical membrane pass occupies residues 280–300; the sequence is FNLFLALIICNAIVDPLIYAF. The Cytoplasmic portion of the chain corresponds to 301–317; the sequence is RSQELRKTLQEVLQCSW. Residue Cys-315 is the site of S-palmitoyl cysteine attachment.

Belongs to the G-protein coupled receptor 1 family. As to quaternary structure, interacts with MGRN1, but does not undergo MGRN1-mediated ubiquitination; this interaction competes with GNAS-binding and thus inhibits agonist-induced cAMP production. Interacts with OPN3; the interaction results in a decrease in MC1R-mediated cAMP signaling and ultimately a decrease in melanin production in melanocytes.

It localises to the cell membrane. In terms of biological role, receptor for MSH (alpha, beta and gamma) and ACTH. The activity of this receptor is mediated by G proteins which activate adenylate cyclase. Mediates melanogenesis, the production of eumelanin (black/brown) and phaeomelanin (red/yellow), via regulation of cAMP signaling in melanocytes. In Rangifer tarandus (Reindeer), this protein is Melanocyte-stimulating hormone receptor (MC1R).